Consider the following 206-residue polypeptide: Ribosomal RNA small subunit methyltransferase G (206 aa).

Residues Gly73, Leu78, 124–125 (VE), and Arg139 contribute to the S-adenosyl-L-methionine site.

The protein belongs to the methyltransferase superfamily. RNA methyltransferase RsmG family.

The protein localises to the cytoplasm. It catalyses the reaction guanosine(527) in 16S rRNA + S-adenosyl-L-methionine = N(7)-methylguanosine(527) in 16S rRNA + S-adenosyl-L-homocysteine. Specifically methylates the N7 position of guanine in position 527 of 16S rRNA. This is Ribosomal RNA small subunit methyltransferase G from Edwardsiella ictaluri (strain 93-146).